The sequence spans 223 residues: Sugar fermentation stimulation protein homolog (223 aa).

Belongs to the SfsA family.

The sequence is that of Sugar fermentation stimulation protein homolog from Thermosipho melanesiensis (strain DSM 12029 / CIP 104789 / BI429).